The primary structure comprises 202 residues: 3-isopropylmalate dehydratase small subunit (202 aa).

It belongs to the LeuD family. LeuD type 1 subfamily. Heterodimer of LeuC and LeuD.

It catalyses the reaction (2R,3S)-3-isopropylmalate = (2S)-2-isopropylmalate. The protein operates within amino-acid biosynthesis; L-leucine biosynthesis; L-leucine from 3-methyl-2-oxobutanoate: step 2/4. Catalyzes the isomerization between 2-isopropylmalate and 3-isopropylmalate, via the formation of 2-isopropylmaleate. This Rhizobium johnstonii (strain DSM 114642 / LMG 32736 / 3841) (Rhizobium leguminosarum bv. viciae) protein is 3-isopropylmalate dehydratase small subunit.